A 198-amino-acid polypeptide reads, in one-letter code: GTP cyclohydrolase 1 (198 aa).

Zn(2+) is bound by residues Cys87, His90, and Cys158.

This sequence belongs to the GTP cyclohydrolase I family. Homomer.

It carries out the reaction GTP + H2O = 7,8-dihydroneopterin 3'-triphosphate + formate + H(+). Its pathway is cofactor biosynthesis; 7,8-dihydroneopterin triphosphate biosynthesis; 7,8-dihydroneopterin triphosphate from GTP: step 1/1. The polypeptide is GTP cyclohydrolase 1 (Janthinobacterium sp. (strain Marseille) (Minibacterium massiliensis)).